The chain runs to 1611 residues: Pentafunctional AROM polypeptide (1611 aa).

The 3-dehydroquinate synthase stretch occupies residues 1-391; sequence MSSSSADVLK…YEEKASVVAD (391 aa). Residues 47-49, 84-87, 115-117, and aspartate 120 contribute to the NAD(+) site; these read DTN, EGAK, and GGV. Arginine 131 lines the 7-phospho-2-dehydro-3-deoxy-D-arabino-heptonate pocket. 140–141 lines the NAD(+) pocket; sequence TT. Residues aspartate 147 and lysine 153 each coordinate 7-phospho-2-dehydro-3-deoxy-D-arabino-heptonate. Residue lysine 162 participates in NAD(+) binding. Asparagine 163 provides a ligand contact to 7-phospho-2-dehydro-3-deoxy-D-arabino-heptonate. Residues 180 to 183 and asparagine 191 contribute to the NAD(+) site; that span reads FLTT. Glutamate 195 serves as a coordination point for Zn(2+). 7-phospho-2-dehydro-3-deoxy-D-arabino-heptonate is bound by residues 195–198 and lysine 257; that span reads EVIK. The active-site Proton acceptor; for 3-dehydroquinate synthase activity is the glutamate 267. 7-phospho-2-dehydro-3-deoxy-D-arabino-heptonate contacts are provided by residues 271-275 and histidine 278; that span reads RNLVN. Histidine 278 is a Zn(2+) binding site. Residue histidine 282 is the Proton acceptor; for 3-dehydroquinate synthase activity of the active site. 7-phospho-2-dehydro-3-deoxy-D-arabino-heptonate contacts are provided by histidine 294 and lysine 363. Histidine 294 serves as a coordination point for Zn(2+). The EPSP synthase stretch occupies residues 404-863; the sequence is VKAATPTKSP…WDDLQNKIGV (460 aa). Cysteine 845 serves as the catalytic For EPSP synthase activity. The segment at 892-1093 is shikimate kinase; that stretch reads DRPIFLIGMR…SVGNPTSFLS (202 aa). 899–906 provides a ligand contact to ATP; sequence GMRGAGKT. A 3-dehydroquinase region spans residues 1094–1318; sequence LTFPDVTPAL…AAPGQLTARE (225 aa). Histidine 1220 functions as the Proton acceptor; for 3-dehydroquinate dehydratase activity in the catalytic mechanism. Lysine 1248 functions as the Schiff-base intermediate with substrate; for 3-dehydroquinate dehydratase activity in the catalytic mechanism. The tract at residues 1331–1611 is shikimate dehydrogenase; that stretch reads AKKFVLFGSP…RKAVLDKYFA (281 aa).

It in the N-terminal section; belongs to the sugar phosphate cyclases superfamily. Dehydroquinate synthase family. In the 2nd section; belongs to the EPSP synthase family. The protein in the 3rd section; belongs to the shikimate kinase family. This sequence in the 4th section; belongs to the type-I 3-dehydroquinase family. It in the C-terminal section; belongs to the shikimate dehydrogenase family. Homodimer. Zn(2+) serves as cofactor.

The protein resides in the cytoplasm. The enzyme catalyses 7-phospho-2-dehydro-3-deoxy-D-arabino-heptonate = 3-dehydroquinate + phosphate. It catalyses the reaction 3-dehydroquinate = 3-dehydroshikimate + H2O. The catalysed reaction is shikimate + NADP(+) = 3-dehydroshikimate + NADPH + H(+). It carries out the reaction shikimate + ATP = 3-phosphoshikimate + ADP + H(+). The enzyme catalyses 3-phosphoshikimate + phosphoenolpyruvate = 5-O-(1-carboxyvinyl)-3-phosphoshikimate + phosphate. The protein operates within metabolic intermediate biosynthesis; chorismate biosynthesis; chorismate from D-erythrose 4-phosphate and phosphoenolpyruvate: step 2/7. Its pathway is metabolic intermediate biosynthesis; chorismate biosynthesis; chorismate from D-erythrose 4-phosphate and phosphoenolpyruvate: step 3/7. It functions in the pathway metabolic intermediate biosynthesis; chorismate biosynthesis; chorismate from D-erythrose 4-phosphate and phosphoenolpyruvate: step 4/7. It participates in metabolic intermediate biosynthesis; chorismate biosynthesis; chorismate from D-erythrose 4-phosphate and phosphoenolpyruvate: step 5/7. The protein operates within metabolic intermediate biosynthesis; chorismate biosynthesis; chorismate from D-erythrose 4-phosphate and phosphoenolpyruvate: step 6/7. Functionally, the AROM polypeptide catalyzes 5 consecutive enzymatic reactions in prechorismate polyaromatic amino acid biosynthesis. In Cryptococcus neoformans var. neoformans serotype D (strain B-3501A) (Filobasidiella neoformans), this protein is Pentafunctional AROM polypeptide.